Reading from the N-terminus, the 64-residue chain is Disintegrin CV-11-beta (64 aa).

The Disintegrin domain maps to 1–64 (NSAHPCCDPV…SDCPRNPWKD (64 aa)). 4 cysteine pairs are disulfide-bonded: C6/C29, C20/C26, C25/C50, and C38/C57. Positions 42–44 (RGD) match the Cell attachment site motif.

Belongs to the disintegrin family. Dimeric disintegrin subfamily. In terms of assembly, heterodimer with subunit alpha; disulfide-linked. In terms of tissue distribution, expressed by the venom gland.

The protein localises to the secreted. Functionally, inhibits ADP-induced human platelet aggregation. Antagonist of alpha-IIb/beta-3 (ITGA2B/ITGB3). The polypeptide is Disintegrin CV-11-beta (Cerastes vipera (Sahara sand viper)).